Reading from the N-terminus, the 501-residue chain is UDP-N-acetylmuramoyl-L-alanyl-D-glutamate--2,6-diaminopimelate ligase (501 aa).

UDP-N-acetyl-alpha-D-muramoyl-L-alanyl-D-glutamate-binding positions include Leu26, Ser28, and 43–45 (HQC). Position 123–129 (123–129 (GTNGKTT)) interacts with ATP. Residues Asn164, 165–166 (TT), Ser192, Gln198, and Arg200 each bind UDP-N-acetyl-alpha-D-muramoyl-L-alanyl-D-glutamate. Lys232 bears the N6-carboxylysine mark. Meso-2,6-diaminopimelate-binding positions include Arg398, 422-425 (DNPR), Gly473, and Glu477. The Meso-diaminopimelate recognition motif signature appears at 422–425 (DNPR).

It belongs to the MurCDEF family. MurE subfamily. Mg(2+) is required as a cofactor. Carboxylation is probably crucial for Mg(2+) binding and, consequently, for the gamma-phosphate positioning of ATP.

Its subcellular location is the cytoplasm. The catalysed reaction is UDP-N-acetyl-alpha-D-muramoyl-L-alanyl-D-glutamate + meso-2,6-diaminopimelate + ATP = UDP-N-acetyl-alpha-D-muramoyl-L-alanyl-gamma-D-glutamyl-meso-2,6-diaminopimelate + ADP + phosphate + H(+). Its pathway is cell wall biogenesis; peptidoglycan biosynthesis. Functionally, catalyzes the addition of meso-diaminopimelic acid to the nucleotide precursor UDP-N-acetylmuramoyl-L-alanyl-D-glutamate (UMAG) in the biosynthesis of bacterial cell-wall peptidoglycan. The sequence is that of UDP-N-acetylmuramoyl-L-alanyl-D-glutamate--2,6-diaminopimelate ligase from Haemophilus ducreyi (strain 35000HP / ATCC 700724).